The primary structure comprises 634 residues: Probable beta-glucosidase C (634 aa).

An N-terminal signal peptide occupies residues 1 to 19 (MRIDCTVASLTALASGCQA). 4 N-linked (GlcNAc...) asparagine glycosylation sites follow: asparagine 90, asparagine 112, asparagine 219, and asparagine 270. The active site involves aspartate 337. Residues asparagine 360, asparagine 476, asparagine 484, and asparagine 524 are each glycosylated (N-linked (GlcNAc...) asparagine).

This sequence belongs to the glycosyl hydrolase 3 family.

The protein localises to the secreted. It carries out the reaction Hydrolysis of terminal, non-reducing beta-D-glucosyl residues with release of beta-D-glucose.. It functions in the pathway glycan metabolism; cellulose degradation. Beta-glucosidases are one of a number of cellulolytic enzymes involved in the degradation of cellulosic biomass. Catalyzes the last step releasing glucose from the inhibitory cellobiose. In Aspergillus flavus (strain ATCC 200026 / FGSC A1120 / IAM 13836 / NRRL 3357 / JCM 12722 / SRRC 167), this protein is Probable beta-glucosidase C (bglC).